A 1404-amino-acid polypeptide reads, in one-letter code: Microtubule organization protein AKNA (1404 aa).

2 disordered regions span residues 1-304 (MASS…VSPL) and 317-382 (QHKQ…RPLI). Serine 51 bears the Phosphoserine mark. The span at 70-91 (WDPDMQDSEESSGEETEADDAS) shows a compositional bias: acidic residues. The span at 185-203 (KSWSSGTVSLRQPSDSLGS) shows a compositional bias: polar residues. A Phosphoserine modification is found at serine 302. Phosphoserine is present on residues serine 485 and serine 520. Residues 494–549 (AEWWPDPAQDPQASEATGWPFPRTDLSPSSSPGVATPGRLPQSQGIATDQPSTGQT) are disordered. Polar residues predominate over residues 534-549 (PQSQGIATDQPSTGQT). Serine 617 carries the post-translational modification Phosphoserine. Residues 645-659 (MDQTQRETEPCRPDL) are compositionally biased toward basic and acidic residues. Residues 645–708 (MDQTQRETEP…TSPGSSCTLP (64 aa)) form a disordered region. Composition is skewed to polar residues over residues 660–674 (QDSTPTMSFLPQSAH) and 686–707 (DGQTYQEPATTTTTSPGSSCTL). A phosphoserine mark is found at serine 750 and serine 753. Positions 754 to 787 (LPEALRDEDEDDLEEEEEEQDHQGPLEVDSPATA) are PEST. 2 disordered regions span residues 755–1038 (PEAL…STAN) and 1085–1185 (HSTQ…RERV). The span at 759–773 (RDEDEDDLEEEEEEQ) shows a compositional bias: acidic residues. Positions 803–813 (TQAEESHRDAT) are enriched in basic and acidic residues. Phosphoserine is present on residues serine 831 and serine 860. A PEST region spans residues 885–906 (HTEEPWMVSPETDSGFVGSETS). 3 stretches are compositionally biased toward polar residues: residues 903–914 (SETSIVSPFTQT), 921–933 (HVSTSGPSAQHLT), and 963–974 (SRTQQHFSSLSS). Serine 971 bears the Phosphoserine mark. A compositionally biased stretch (low complexity) spans 1015–1029 (TSPDSAPAPTAASTP). The span at 1085–1098 (HSTQTQEKLGSSPS) shows a compositional bias: polar residues. Positions 1088–1096 (QTQEKLGSS) form a DNA-binding region, a.T hook. Serine 1144 and serine 1145 each carry phosphoserine. Residues 1155-1167 (SSEKSRTFEEHPE) show a composition bias toward basic and acidic residues. Serine 1200 is subject to Phosphoserine. Disordered stretches follow at residues 1208 to 1235 (SGTPSCPHCHPIRTQDTGSAVSRDTTRG) and 1253 to 1286 (SAEADGSSSGPSEKNTPKKPSTPILKRKNRQTGS). The span at 1221 to 1235 (TQDTGSAVSRDTTRG) shows a compositional bias: polar residues. 3 positions are modified to phosphoserine: serine 1339, serine 1352, and serine 1389.

The protein belongs to the AKNA family. As to quaternary structure, interacts with DCTN1. Interacts with MAPRE1/EB1. Interacts with ODF2. Interacts with CAMSAP3. In terms of processing, phosphorylated; phosphorylation regulates dissociation from and reassembly at the centrosome. In terms of tissue distribution, expressed in neural stem cells isolated at the peak of subventricular zone (SVZ): localizes at the subdistal appendages of the mother centriole in specific subtypes of neural stem cells and in almost all basal progenitors.

The protein localises to the cytoplasm. Its subcellular location is the cytoskeleton. The protein resides in the microtubule organizing center. It localises to the centrosome. It is found in the centriole. The protein localises to the nucleus. Functionally, centrosomal protein that plays a key role in cell delamination by regulating microtubule organization. Required for the delamination and retention of neural stem cells from the subventricular zone during neurogenesis. Also regulates the epithelial-to-mesenchymal transition in other epithelial cells. Acts by increasing centrosomal microtubule nucleation and recruiting nucleation factors and minus-end stabilizers, thereby destabilizing microtubules at the adherens junctions and mediating constriction of the apical endfoot. In addition, may also act as a transcription factor that specifically activates the expression of the CD40 receptor and its ligand CD40L/CD154, two cell surface molecules on lymphocytes that are critical for antigen-dependent-B-cell development. Binds to A/T-rich promoters. It is unclear how it can both act as a microtubule organizer and as a transcription factor; additional evidences are required to reconcile these two apparently contradictory functions. This chain is Microtubule organization protein AKNA, found in Mus musculus (Mouse).